We begin with the raw amino-acid sequence, 160 residues long: Large ribosomal subunit protein uL15 (160 aa).

A compositionally biased stretch (polar residues) spans 1–14; that stretch reads MKLNDISDNPGSSK. Residues 1 to 35 are disordered; the sequence is MKLNDISDNPGSSKSRMRVGRGIGSGKGKTCGRGV. A compositionally biased stretch (gly residues) spans 21 to 35; it reads RGIGSGKGKTCGRGV.

Belongs to the universal ribosomal protein uL15 family. As to quaternary structure, part of the 50S ribosomal subunit.

Binds to the 23S rRNA. The polypeptide is Large ribosomal subunit protein uL15 (Beijerinckia indica subsp. indica (strain ATCC 9039 / DSM 1715 / NCIMB 8712)).